Consider the following 396-residue polypeptide: Probable sugar efflux transporter (396 aa).

12 consecutive transmembrane segments (helical) span residues 15-35 (VVTLAVAAFIFNTTEFVPVGL), 50-70 (VGIMLTIYAWVVALMSLPFML), 81-101 (LICLFVVFIASHVLSFLSWSF), 103-123 (VLVISRIGVAFAHAIFWSITA), 136-156 (AQALSLIATGTALAMVLGLPL), 170-190 (FFAIGIGALITLLCLIKLLPL), 209-229 (PALMSIYLLTVVVVTAHYTAY), 246-266 (FATALLLLLGGAGIIGSVIFG), 275-295 (ALVSTAIALLLVCLALLLPAA), 299-319 (IHLGVLSIFWGIAMMIIGLGM), 333-353 (VAMALFSGIFNIGIGAGALVG), and 364-384 (MIGYVGTVPAFAALIWSIIIF).

This sequence belongs to the major facilitator superfamily. SotB (TC 2.A.1.2) family.

Its subcellular location is the cell inner membrane. In terms of biological role, involved in the efflux of sugars. The physiological role may be the reduction of the intracellular concentration of toxic sugars or sugar metabolites. This is Probable sugar efflux transporter from Escherichia coli O157:H7 (strain EC4115 / EHEC).